A 163-amino-acid polypeptide reads, in one-letter code: Protein-export protein SecB (163 aa).

It belongs to the SecB family. In terms of assembly, homotetramer, a dimer of dimers. One homotetramer interacts with 1 SecA dimer.

Its subcellular location is the cytoplasm. In terms of biological role, one of the proteins required for the normal export of preproteins out of the cell cytoplasm. It is a molecular chaperone that binds to a subset of precursor proteins, maintaining them in a translocation-competent state. It also specifically binds to its receptor SecA. The sequence is that of Protein-export protein SecB from Brucella abortus (strain S19).